The chain runs to 3623 residues: Cubilin (3623 aa).

The signal sequence occupies residues 1–23 (MMNMSLPFLWSLLTLLIFAEVNG). A propeptide spans 24–35 (EAGELELQRQKR) (removed in mature form). An interaction with AMN region spans residues 42–49 (PRMATERG). The N-linked (GlcNAc...) asparagine glycan is linked to Asn-105. Residues 132–168 (DKKVCSSNPCQNGGTCLNLHDSFFCICPPQWKGPLCS) form the EGF-like 1 domain. Intrachain disulfides connect Cys-136/Cys-147, Cys-141/Cys-156, Cys-158/Cys-167, Cys-174/Cys-190, Cys-184/Cys-199, Cys-201/Cys-210, Cys-267/Cys-280, Cys-274/Cys-289, and Cys-292/Cys-303. The EGF-like 2; calcium-binding domain occupies 170–211 (DVNECEIYSGTPLSCQNGGTCVNTMGSYSCHCPPETYGPQCA). The EGF-like 3; calcium-binding domain maps to 263–304 (DRDECSFQPGPCSTLVQCFNTQGSFYCGACPTGWQGNGYICE). The 44-residue stretch at 305-348 (DINECEINNGGCSVAPPVECVNTPGSSHCQACPPGYQGDGRVCT) folds into the EGF-like 4; calcium-binding domain. 2 consecutive EGF-like domains span residues 349-385 (LTDICSVSNGGCHPDASCSSTLGSLPLCTCLPGYTGN) and 395-430 (LSNICLSHPCLNGQCIDTVSGYFCKCDSGWTGVNCT). Cystine bridges form between Cys-353–Cys-366, Cys-360–Cys-376, Cys-399–Cys-409, Cys-404–Cys-418, Cys-420–Cys-429, Cys-436–Cys-447, Cys-441–Cys-456, Cys-458–Cys-467, Cys-474–Cys-500, Cys-527–Cys-549, Cys-590–Cys-616, Cys-643–Cys-665, and Cys-708–Cys-734. Asn-428 is a glycosylation site (N-linked (GlcNAc...) asparagine). One can recognise an EGF-like 7; calcium-binding domain in the interval 432–468 (NINECLSNPCLNGGTCVDGVDSFSCECTRLWTGALCQ). 27 consecutive CUB domains span residues 474-586 (CGES…WETQ), 590-702 (CGGI…YLTS), 708-816 (CGGN…YQVA), 816-928 (ACGD…FSAE), 932-1042 (CGEI…YEAI), 1048-1161 (CLQD…WDGS), 1165-1277 (CGGN…YRQT), 1278-1389 (CENV…WFVY), 1391-1506 (CGGE…WQAV), 1510-1619 (CGGI…FRQA), 1620-1734 (CGGH…VTAS), 1738-1850 (CGGT…FMKI), 1852-1963 (GNDN…WFAV), 1978-2091 (CGGF…FHKS), 2092-2213 (CGGY…YEAK), 2217-2334 (CGGN…YSIA), 2336-2448 (CGGR…FESS), 2452-2565 (CGGD…YTSS), 2570-2687 (CGGS…YSFT), 2689-2801 (CGGI…WNTQ), 2805-2919 (CGGI…FVSR), 2920-3035 (CGSN…YRII), 3037-3150 (CGGV…FRQT), 3157-3274 (CGGY…YTIM), 3278-3393 (CGGT…YQIA), 3395-3507 (CNRD…WTSS), and 3511-3623 (CGGT…TWDS). Asn-482 carries an N-linked (GlcNAc...) asparagine glycan. N-linked (GlcNAc...) asparagine glycans are attached at residues Asn-711, Asn-749, Asn-781, and Asn-857. Intrachain disulfides connect Cys-869-Cys-891 and Cys-932-Cys-958. Asn-957 carries N-linked (GlcNAc...) asparagine glycosylation. Residue Glu-980 participates in Ca(2+) binding. Asn-984 is a glycosylation site (N-linked (GlcNAc...) asparagine). Residues Cys-985 and Cys-1005 are joined by a disulfide bond. Residues Asp-988, Asp-1027, Asp-1029, and Leu-1030 each contribute to the Ca(2+) site. A disulfide bond links Cys-1048 and Cys-1074. A glycan (N-linked (GlcNAc...) asparagine) is linked at Asn-1092. Ca(2+)-binding residues include Glu-1096, Asp-1105, Asp-1146, Ile-1148, and Asp-1149. Cys-1165 and Cys-1191 form a disulfide bridge. N-linked (GlcNAc...) asparagine glycosylation occurs at Asn-1168. Glu-1213 serves as a coordination point for Ca(2+). The N-linked (GlcNAc...) asparagine glycan is linked to Asn-1217. Cys-1218 and Cys-1240 are oxidised to a cystine. Ca(2+) contacts are provided by Asp-1221, Asp-1262, Gly-1264, and Gln-1265. The cysteines at positions 1278 and 1306 are disulfide-linked. N-linked (GlcNAc...) asparagine glycosylation is found at Asn-1285, Asn-1307, and Asn-1319. Ca(2+) is bound at residue Glu-1328. Asn-1332 is a glycosylation site (N-linked (GlcNAc...) asparagine). The cysteines at positions 1333 and 1351 are disulfide-linked. 3 residues coordinate Ca(2+): Asp-1336, Asp-1373, and Val-1375. Disulfide bonds link Cys-1391/Cys-1417 and Cys-1444/Cys-1466. Asn-1500 carries N-linked (GlcNAc...) asparagine glycosylation. An intrachain disulfide couples Cys-1510 to Cys-1536. Asn-1551 carries an N-linked (GlcNAc...) asparagine glycan. 5 cysteine pairs are disulfide-bonded: Cys-1563-Cys-1581, Cys-1620-Cys-1647, Cys-1675-Cys-1697, Cys-1738-Cys-1764, and Cys-1791-Cys-1812. N-linked (GlcNAc...) asparagine glycosylation is present at Asn-1646. Residues Asn-1802, Asn-1819, and Asn-1885 are each glycosylated (N-linked (GlcNAc...) asparagine). 3 disulfide bridges follow: Cys-1905/Cys-1927, Cys-1978/Cys-2006, and Cys-2032/Cys-2054. N-linked (GlcNAc...) asparagine glycans are attached at residues Asn-2085 and Asn-2117. Intrachain disulfides connect Cys-2092/Cys-2118 and Cys-2217/Cys-2247. Asn-2274 carries an N-linked (GlcNAc...) asparagine glycan. 2 cysteine pairs are disulfide-bonded: Cys-2275-Cys-2297 and Cys-2336-Cys-2363. Residues Asn-2386 and Asn-2400 are each glycosylated (N-linked (GlcNAc...) asparagine). Disulfide bonds link Cys-2390-Cys-2411, Cys-2452-Cys-2478, and Cys-2505-Cys-2527. N-linked (GlcNAc...) asparagine glycans are attached at residues Asn-2531, Asn-2581, Asn-2592, and Asn-2610. Cys-2570 and Cys-2599 are joined by a disulfide. 7 disulfides stabilise this stretch: Cys-2628–Cys-2649, Cys-2689–Cys-2715, Cys-2742–Cys-2764, Cys-2805–Cys-2831, Cys-2860–Cys-2883, Cys-2920–Cys-2946, and Cys-2977–Cys-2999. N-linked (GlcNAc...) asparagine glycosylation is present at Asn-2813. Residues Asn-2923 and Asn-2945 are each glycosylated (N-linked (GlcNAc...) asparagine). Thr-3008 is subject to Phosphothreonine. Intrachain disulfides connect Cys-3037–Cys-3064 and Cys-3091–Cys-3113. N-linked (GlcNAc...) asparagine glycans are attached at residues Asn-3042, Asn-3103, Asn-3125, and Asn-3165. 2 disulfide bridges follow: Cys-3157–Cys-3185 and Cys-3215–Cys-3237. N-linked (GlcNAc...) asparagine glycosylation is found at Asn-3268, Asn-3283, Asn-3290, and Asn-3295. Disulfide bonds link Cys-3278–Cys-3306 and Cys-3332–Cys-3354. A glycan (N-linked (GlcNAc...) asparagine) is linked at Asn-3357. Cys-3395 and Cys-3421 are joined by a disulfide. 4 N-linked (GlcNAc...) asparagine glycosylation sites follow: Asn-3430, Asn-3457, Asn-3533, and Asn-3576. Intrachain disulfides connect Cys-3448–Cys-3470, Cys-3511–Cys-3537, and Cys-3564–Cys-3586.

As to quaternary structure, interacts with AMN. Component of the cubam complex composed of one CUBN trimer and one AMN chain. The cubam complex can dimerize. Interacts with LRP2 in a dual-receptor complex in a calcium-dependent manner. Found in a complex with PID1/PCLI1, LRP1 and CUBNI. Interacts with LRP1 and PID1/PCLI1. In terms of processing, the precursor is cleaved by a trans-Golgi proteinase furin, removing a propeptide. N-glycosylated. As to expression, detected in kidney cortex (at protein level). Expressed in kidney proximal tubule cells, placenta, visceral yolk-sac cells and in absorptive intestinal cells. Expressed in the epithelium of intestine and kidney.

It is found in the apical cell membrane. Its subcellular location is the cell membrane. The protein localises to the membrane. The protein resides in the coated pit. It localises to the endosome. It is found in the lysosome membrane. Endocytic receptor which plays a role in lipoprotein, vitamin and iron metabolism by facilitating their uptake. Acts together with LRP2 to mediate endocytosis of high-density lipoproteins, GC, hemoglobin, ALB, TF and SCGB1A1. Acts together with AMN to mediate endocytosis of the CBLIF-cobalamin complex. Binds to ALB, MB, Kappa and lambda-light chains, TF, hemoglobin, GC, SCGB1A1, APOA1, high density lipoprotein, and the CBLIF-cobalamin complex. Ligand binding requires calcium. Serves as important transporter in several absorptive epithelia, including intestine, renal proximal tubules and embryonic yolk sac. May play an important role in the development of the peri-implantation embryo through internalization of APOA1 and cholesterol. Binds to LGALS3 at the maternal-fetal interface. This chain is Cubilin (CUBN), found in Homo sapiens (Human).